A 458-amino-acid polypeptide reads, in one-letter code: Bifunctional protein HldE (458 aa).

The tract at residues 1 to 311 (MVNVLVVGDL…ENLKSKKSGF (311 aa)) is ribokinase. ATP is bound at residue 189–192 (NKKE). Residue Asp-257 is part of the active site. Positions 333-458 (FTNGCFDILH…TTNIINKIKG (126 aa)) are cytidylyltransferase.

It in the N-terminal section; belongs to the carbohydrate kinase PfkB family. This sequence in the C-terminal section; belongs to the cytidylyltransferase family. In terms of assembly, homodimer.

The enzyme catalyses D-glycero-beta-D-manno-heptose 7-phosphate + ATP = D-glycero-beta-D-manno-heptose 1,7-bisphosphate + ADP + H(+). It carries out the reaction D-glycero-beta-D-manno-heptose 1-phosphate + ATP + H(+) = ADP-D-glycero-beta-D-manno-heptose + diphosphate. The protein operates within nucleotide-sugar biosynthesis; ADP-L-glycero-beta-D-manno-heptose biosynthesis; ADP-L-glycero-beta-D-manno-heptose from D-glycero-beta-D-manno-heptose 7-phosphate: step 1/4. It functions in the pathway nucleotide-sugar biosynthesis; ADP-L-glycero-beta-D-manno-heptose biosynthesis; ADP-L-glycero-beta-D-manno-heptose from D-glycero-beta-D-manno-heptose 7-phosphate: step 3/4. Its function is as follows. Catalyzes the phosphorylation of D-glycero-D-manno-heptose 7-phosphate at the C-1 position to selectively form D-glycero-beta-D-manno-heptose-1,7-bisphosphate. Functionally, catalyzes the ADP transfer from ATP to D-glycero-beta-D-manno-heptose 1-phosphate, yielding ADP-D-glycero-beta-D-manno-heptose. The protein is Bifunctional protein HldE of Campylobacter fetus subsp. fetus (strain 82-40).